A 325-amino-acid chain; its full sequence is Methionine import ATP-binding protein MetN 3 (325 aa).

An ABC transporter domain is found at 2-239 (IEVQQLCKVY…PQSALGRALL (238 aa)). 36-43 (GRSGAGKS) is a binding site for ATP.

This sequence belongs to the ABC transporter superfamily. Methionine importer (TC 3.A.1.24) family. The complex is composed of two ATP-binding proteins (MetN), two transmembrane proteins (MetI) and a solute-binding protein (MetQ).

Its subcellular location is the cell inner membrane. The catalysed reaction is L-methionine(out) + ATP + H2O = L-methionine(in) + ADP + phosphate + H(+). The enzyme catalyses D-methionine(out) + ATP + H2O = D-methionine(in) + ADP + phosphate + H(+). Part of the ABC transporter complex MetNIQ involved in methionine import. Responsible for energy coupling to the transport system. This chain is Methionine import ATP-binding protein MetN 3, found in Pseudomonas fluorescens (strain ATCC BAA-477 / NRRL B-23932 / Pf-5).